A 500-amino-acid polypeptide reads, in one-letter code: Cytochrome c-552 (500 aa).

An N-terminal signal peptide occupies residues 1-24 (MKFLIKSLAVATISILGCLQTALA). The heme c site is built by histidine 102, cysteine 130, cysteine 133, lysine 134, cysteine 168, cysteine 171, histidine 172, cysteine 217, cysteine 220, and histidine 221. Positions 223, 224, 268, and 270 each coordinate Ca(2+). Tyrosine 224 provides a ligand contact to substrate. Histidine 271 contacts substrate. Heme c is bound by residues histidine 282, cysteine 289, cysteine 292, histidine 293, histidine 308, cysteine 321, cysteine 324, histidine 325, and histidine 400. The segment at 477 to 500 (ARAKGLLPAEEADKPVAAPKAEAK) is disordered.

Belongs to the cytochrome c-552 family. Ca(2+) is required as a cofactor. The cofactor is heme c.

It localises to the periplasm. It carries out the reaction 6 Fe(III)-[cytochrome c] + NH4(+) + 2 H2O = 6 Fe(II)-[cytochrome c] + nitrite + 8 H(+). The protein operates within nitrogen metabolism; nitrate reduction (assimilation). Functionally, catalyzes the reduction of nitrite to ammonia, consuming six electrons in the process. In Mannheimia haemolytica (Pasteurella haemolytica), this protein is Cytochrome c-552.